The sequence spans 206 residues: MSGLFVSFEGVDGVGKTTQVERLRAYLEAQGRTVVVTREPGGTALGKAIRQLLLHGVDGGAVDIAPRAEALLFAADRAQHVAETIRPALERGEVVITDRYLDSSLAYQAGGRELTPEEIRSLSMWATNNLLPDRTYLLDMDPALSHNRLEHAEDRMESAGSDFQSRTRQAFLDLAAAEPNRFRVIDASQSIEAVWAAIESDIKELA.

Residue Gly-10–Thr-17 participates in ATP binding.

The protein belongs to the thymidylate kinase family.

The enzyme catalyses dTMP + ATP = dTDP + ADP. Its function is as follows. Phosphorylation of dTMP to form dTDP in both de novo and salvage pathways of dTTP synthesis. This chain is Thymidylate kinase, found in Bifidobacterium longum (strain DJO10A).